The following is a 501-amino-acid chain: Cyclin-dependent kinase 19 (501 aa).

N-acetylmethionine is present on Met1. The region spanning 21-335 (EYEGCKVGRG…SEQALQDPYF (315 aa)) is the Protein kinase domain. Residues 27 to 35 (VGRGTYGHV) and Lys52 contribute to the ATP site. Asp151 serves as the catalytic Proton acceptor. A disordered region spans residues 362 to 501 (DEPEEKGDKN…YHSSHQTHRY (140 aa)). Low complexity predominate over residues 371–392 (NQPQQQNPHQQPAAPAQQTAAP). Residues 408 to 421 (TAGGATAGGGGAGA) show a composition bias toward gly residues. A Phosphoserine modification is found at Ser449. Residues 467–495 (YQSSVQGSSQSQSTLGYSSSQQSTQYHSS) are compositionally biased toward low complexity.

This sequence belongs to the protein kinase superfamily. CMGC Ser/Thr protein kinase family. CDC2/CDKX subfamily.

Its subcellular location is the cytoplasm. The protein localises to the perinuclear region. It localises to the nucleus. The enzyme catalyses L-seryl-[protein] + ATP = O-phospho-L-seryl-[protein] + ADP + H(+). The catalysed reaction is L-threonyl-[protein] + ATP = O-phospho-L-threonyl-[protein] + ADP + H(+). In Mus musculus (Mouse), this protein is Cyclin-dependent kinase 19 (Cdk19).